The primary structure comprises 569 residues: Sulfite reductase [NADPH] hemoprotein beta-component (569 aa).

Positions 433, 439, 478, and 482 each coordinate [4Fe-4S] cluster. Cysteine 482 serves as a coordination point for siroheme.

The protein belongs to the nitrite and sulfite reductase 4Fe-4S domain family. Alpha(8)-beta(8). The alpha component is a flavoprotein, the beta component is a hemoprotein. Siroheme is required as a cofactor. Requires [4Fe-4S] cluster as cofactor.

It carries out the reaction hydrogen sulfide + 3 NADP(+) + 3 H2O = sulfite + 3 NADPH + 4 H(+). The protein operates within sulfur metabolism; hydrogen sulfide biosynthesis; hydrogen sulfide from sulfite (NADPH route): step 1/1. Functionally, component of the sulfite reductase complex that catalyzes the 6-electron reduction of sulfite to sulfide. This is one of several activities required for the biosynthesis of L-cysteine from sulfate. This is Sulfite reductase [NADPH] hemoprotein beta-component from Pseudoalteromonas atlantica (strain T6c / ATCC BAA-1087).